A 124-amino-acid chain; its full sequence is Thioredoxin domain-containing protein C21C3.12c (124 aa).

The Thioredoxin domain occupies 37 to 124; it reads PWCPTVRAAL…ANKFSKFIDI (88 aa). The active-site Nucleophile is the cysteine 39.

Belongs to the thioredoxin family.

Its subcellular location is the cytoplasm. It localises to the nucleus. This chain is Thioredoxin domain-containing protein C21C3.12c, found in Schizosaccharomyces pombe (strain 972 / ATCC 24843) (Fission yeast).